The sequence spans 357 residues: MFSSVAHLARANPFNAPHLQLVHDGLSGPRSPPAPPRRSRHLAAAAVEEYSCEFGSMKYYALCGFGGVLSCGLTHTAVVPLDLVKCRMQVDPQKYKGIFNGFSITLKEDGVRGLAKGWAPTLIGYSMQGLCKFGFYEVFKALYSNILGEENTYLWRTSLYLASSASAEFFADIALAPMEAAKVRIQTQPGYANTLREAVPKMYKEEGLNAFYKGVAPLWMRQIPYTMMKFACFERTVEALYKFVVPKPRSECTKAEQLVVTFVAGYIAGVFCAIVSHPADSVVSVLNKEKGSTASQVLQRLGFRGVWKGLFARIIMIGTLTALQWFIYDSVKVYFRLPRPPPPEMPESLKKKLGLTE.

A mitochondrion-targeting transit peptide spans 1-45 (MFSSVAHLARANPFNAPHLQLVHDGLSGPRSPPAPPRRSRHLAAA). The Mitochondrial intermembrane portion of the chain corresponds to 46 to 58 (AVEEYSCEFGSMK). Solcar repeat units follow at residues 58–142 (KYYA…FKAL), 155–239 (WRTS…TVEA), and 256–334 (EQLV…VKVY). Residues 59-81 (YYALCGFGGVLSCGLTHTAVVPL) traverse the membrane as a helical segment. Residues 82 to 116 (DLVKCRMQVDPQKYKGIFNGFSITLKEDGVRGLAK) lie on the Mitochondrial matrix side of the membrane. Position 94 is an N6-acetyllysine (lysine 94). Lysine 107 carries the N6-methyllysine modification. A helical membrane pass occupies residues 117–136 (GWAPTLIGYSMQGLCKFGFY). Residues 137–156 (EVFKALYSNILGEENTYLWR) are Mitochondrial intermembrane-facing. Residues 157-178 (TSLYLASSASAEFFADIALAPM) form a helical membrane-spanning segment. Topologically, residues 179-213 (EAAKVRIQTQPGYANTLREAVPKMYKEEGLNAFYK) are mitochondrial matrix. Tyrosine 191 carries the post-translational modification Phosphotyrosine. At lysine 204 the chain carries N6-acetyllysine. The helical transmembrane segment at 214–233 (GVAPLWMRQIPYTMMKFACF) threads the bilayer. Residues 234–256 (ERTVEALYKFVVPKPRSECTKAE) lie on the Mitochondrial intermembrane side of the membrane. A helical membrane pass occupies residues 257–279 (QLVVTFVAGYIAGVFCAIVSHPA). Topologically, residues 280–309 (DSVVSVLNKEKGSTASQVLQRLGFRGVWKG) are mitochondrial matrix. Residues 310-328 (LFARIIMIGTLTALQWFIY) traverse the membrane as a helical segment. Residues 329 to 357 (DSVKVYFRLPRPPPPEMPESLKKKLGLTE) are Mitochondrial intermembrane-facing.

It belongs to the mitochondrial carrier (TC 2.A.29) family. In terms of assembly, interacts with PPIF; the interaction is impaired by CsA.

The protein resides in the mitochondrion inner membrane. It carries out the reaction phosphate(in) + H(+)(in) = phosphate(out) + H(+)(out). Inorganic ion transporter that transports phosphate or copper ions across the mitochondrial inner membrane into the matrix compartment. Mediates proton-coupled symport of phosphate ions necessary for mitochondrial oxidative phosphorylation of ADP to ATP. Transports copper ions probably in the form of anionic copper(I) complexes to maintain mitochondrial matrix copper pool and to supply copper for cytochrome C oxidase complex assembly. May also play a role in regulation of the mitochondrial permeability transition pore (mPTP). The chain is Solute carrier family 25 member 3 from Mus musculus (Mouse).